The following is a 212-amino-acid chain: Peptide methionine sulfoxide reductase MsrA (212 aa).

Residue C52 is part of the active site.

Belongs to the MsrA Met sulfoxide reductase family.

It catalyses the reaction L-methionyl-[protein] + [thioredoxin]-disulfide + H2O = L-methionyl-(S)-S-oxide-[protein] + [thioredoxin]-dithiol. The catalysed reaction is [thioredoxin]-disulfide + L-methionine + H2O = L-methionine (S)-S-oxide + [thioredoxin]-dithiol. Has an important function as a repair enzyme for proteins that have been inactivated by oxidation. Catalyzes the reversible oxidation-reduction of methionine sulfoxide in proteins to methionine. In Salmonella schwarzengrund (strain CVM19633), this protein is Peptide methionine sulfoxide reductase MsrA.